A 294-amino-acid chain; its full sequence is MSGDGLSNGPPPGARPDWTIDQGWETYTQAEHDVWITLYERQTDMLHGRACDEFMRGLDALDLHRSGIPDFARINEELKRLTGWTVVAVPGLVPDDVFFDHLANRRFPAGQFIRKPHELDYLQEPDIFHDVFGHVPMLTDPVFADYMQAYGEGGRRALGLGRLANLARLYWYTVEFGLMNTPAGLRIYGAGIVSSRTESIFALDDPSPNRIGFDLERVMRTLYRIDDFQQVYFVIDSIQTLQEVTLRDFGAIYERLASVSDIGVAEIVPGDAVLTRGTQAYATAGGRLAGAAAG.

A disordered region spans residues 1 to 20 (MSGDGLSNGPPPGARPDWTI). The Fe cation site is built by H129, H134, and E175.

The protein belongs to the biopterin-dependent aromatic amino acid hydroxylase family. The cofactor is Fe(2+).

The catalysed reaction is (6R)-L-erythro-5,6,7,8-tetrahydrobiopterin + L-phenylalanine + O2 = (4aS,6R)-4a-hydroxy-L-erythro-5,6,7,8-tetrahydrobiopterin + L-tyrosine. Its pathway is amino-acid degradation; L-phenylalanine degradation; acetoacetate and fumarate from L-phenylalanine: step 1/6. In Caulobacter vibrioides (strain ATCC 19089 / CIP 103742 / CB 15) (Caulobacter crescentus), this protein is Phenylalanine-4-hydroxylase (phhA).